The following is an 86-amino-acid chain: Cell division topological specificity factor (86 aa).

The protein belongs to the MinE family.

In terms of biological role, prevents the cell division inhibition by proteins MinC and MinD at internal division sites while permitting inhibition at polar sites. This ensures cell division at the proper site by restricting the formation of a division septum at the midpoint of the long axis of the cell. This is Cell division topological specificity factor from Bordetella petrii (strain ATCC BAA-461 / DSM 12804 / CCUG 43448).